Consider the following 397-residue polypeptide: Serpin B10 (397 aa).

The Nuclear localization signal signature appears at 74 to 77 (KKRK).

Belongs to the serpin family. Ov-serpin subfamily.

It localises to the nucleus. Its subcellular location is the cytoplasm. Its function is as follows. Protease inhibitor that may play a role in the regulation of protease activities during hematopoiesis and apoptosis induced by TNF. May regulate protease activities in the cytoplasm and in the nucleus. In Mus musculus (Mouse), this protein is Serpin B10 (Serpinb10).